Consider the following 793-residue polypeptide: MPLPGGLWWLLCCRRGFTLLHRDYGDGELSGDGDEDEDEETFELRTPSPAGGGRGPLEVTLTQPVRSGPVSNRLQSWEETWSLIPEKGLPEDDPDIVVKGWLYREPRGGGARPWLPPRRAWFVLTRDSLDQFSSSGKGARRLGSLVLTSLCSVTGPERRRKETGLWSVTVSGRKHSVRLCSPRQAEAERWGVALREVIASKAPLETPTQLLLRDIQESCGDPEAVALIYLRNPILRHTSGALYAPLLPLPYGVSAPGPGYAPLREEAVRLFLALQALEGARRPGPLMQGVLQTCRDLPALRDELFLQLAKQTSGPAGPPGLPATQDPAALRYWQLLTCMSCTFRPGGAVRGHLLGHLERTEQALPDSELAEYARFIRKALGRTRGRELVPSLAEISALSQRQELLCTVHCPGAGACAVAIDSHTTAGEVARELVGRLGLARSRNAFALYEQRGAQERALAGGTLVADVLTRFENLAAEEAGLEDSPDSGWRLCLRLHGPLHPEGLSPDGHELPFLFEQAHALLLRGRPPPPDDTLRALAALRLQSLQRDFSPRVPLPRLDRLLPPPAPPREDPPRPTPRPPPSAALLAGALWSPGLAKRRAERARRGGAGRTAGSIAREGGGGAGTAAAVLGGWKRLRGMGRAEAMAAYLALAAQCPGFGAARYDVLELSTEPGRGAPQKLCLGLGAKAMSLSRPGETEPIHSVSYGHVAACQLMGPHTLALRVGESQLLLQSPQVEEIMQLVNAYLANPSPERPCSSSSPPCQDLPDTSPPSQRPGLDEPQGQSGCLGQLQD.

The first 18 residues, 1–18 (MPLPGGLWWLLCCRRGFT), serve as a signal peptide directing secretion. The disordered stretch occupies residues 28-62 (ELSGDGDEDEDEETFELRTPSPAGGGRGPLEVTLT). Residues 29-41 (LSGDGDEDEDEET) show a composition bias toward acidic residues. Position 30 is a phosphoserine (S30). The 105-residue stretch at 95–199 (DIVVKGWLYR…WGVALREVIA (105 aa)) folds into the PH domain. The MyTH4 domain maps to 237–399 (HTSGALYAPL…PSLAEISALS (163 aa)). Residues 404–754 (LLCTVHCPGA…AYLANPSPER (351 aa)) form the FERM domain. Disordered regions lie at residues 554-586 (VPLPRLDRLLPPPAPPREDPPRPTPRPPPSAAL) and 598-622 (KRRAERARRGGAGRTAGSIAREGGG). Basic residues predominate over residues 598–608 (KRRAERARRGG). Omega-N-methylarginine occurs at positions 638 and 642. Low complexity predominate over residues 750–762 (PSPERPCSSSSPP). Residues 750-793 (PSPERPCSSSSPPCQDLPDTSPPSQRPGLDEPQGQSGCLGQLQD) are disordered. Residues 782–793 (QGQSGCLGQLQD) are compositionally biased toward polar residues.

In Homo sapiens (Human), this protein is Pleckstrin homology domain-containing family H member 3 (PLEKHH3).